The sequence spans 60 residues: MDPCDCSKSGTCNCGGSCTCTNCSCKSCKKSCCPCCPSGCTKCASGCVCKGKTCDTSCCQ.

The interval Met1–Cys28 is beta. The a divalent metal cation site is built by Cys4, Cys6, Cys12, Cys14, Cys18, Cys20, Cys23, Cys25, Cys28, Cys32, Cys33, Cys35, Cys36, Cys40, Cys43, Cys47, Cys49, Cys54, Cys58, and Cys59. The tract at residues Lys29 to Gln60 is alpha.

It belongs to the metallothionein superfamily. Type 1 family.

Its function is as follows. Metallothioneins have a high content of cysteine residues that bind various heavy metals. In Chionodraco hamatus (Antarctic teleost icefish), this protein is Metallothionein A (mta).